Consider the following 187-residue polypeptide: MVRPLNCIVAVSQNMGIGKNGDLPWPLLRNEFKYFQRMTTTSSVEGKQNLVIMGRKTWFSIPEKNRPLKDRINIVLSRELKEPPQGAHFLAKSLDDALKLIEQPELASKVDMVWVVGGSSVYQEAMNQPGHLRLFVTRIMQEFESDTFFPEIDLEKYKLLPEYPGVLSEIQEEKGIKYKFEVYEKKD.

Residues 4–185 (PLNCIVAVSQ…IKYKFEVYEK (182 aa)) form the DHFR domain. NADP(+) contacts are provided by residues Ala10 and 16-22 (GIGKNGD). 31-36 (EFKYFQ) is a substrate binding site. Lys33 is subject to N6-acetyllysine; alternate. Residue Lys33 is modified to N6-succinyllysine; alternate. 55–57 (RKT) is a binding site for NADP(+). Position 71 (Arg71) interacts with substrate. Residues 77 to 79 (SRE) and 117 to 124 (GGSSVYQE) contribute to the NADP(+) site.

Belongs to the dihydrofolate reductase family. In terms of assembly, homodimer.

Its subcellular location is the mitochondrion. The protein resides in the cytoplasm. The catalysed reaction is (6S)-5,6,7,8-tetrahydrofolate + NADP(+) = 7,8-dihydrofolate + NADPH + H(+). It participates in cofactor biosynthesis; tetrahydrofolate biosynthesis; 5,6,7,8-tetrahydrofolate from 7,8-dihydrofolate: step 1/1. Its function is as follows. Key enzyme in folate metabolism. Contributes to the de novo mitochondrial thymidylate biosynthesis pathway. Catalyzes an essential reaction for de novo glycine and purine synthesis, and for DNA precursor synthesis. Binds its own mRNA. The protein is Dihydrofolate reductase (Dhfr) of Rattus norvegicus (Rat).